The primary structure comprises 267 residues: Small ribosomal subunit protein uS2 (267 aa).

The tract at residues 224 to 244 is disordered; sequence GRQGEDEDVTEDSFKDNKDAK. A compositionally biased stretch (basic and acidic residues) spans 235–244; sequence DSFKDNKDAK.

The protein belongs to the universal ribosomal protein uS2 family.

This is Small ribosomal subunit protein uS2 from Lactiplantibacillus plantarum (strain ATCC BAA-793 / NCIMB 8826 / WCFS1) (Lactobacillus plantarum).